The primary structure comprises 804 residues: Phenylalanine--tRNA ligase beta subunit (804 aa).

The region spanning 40–155 (GEGIKGVVIG…NDAETGSDAL (116 aa)) is the tRNA-binding domain. In terms of domain architecture, B5 spans 409–484 (IEANNIHVSA…RLYGYDNIPS (76 aa)). Positions 462, 468, 471, and 472 each coordinate Mg(2+). In terms of domain architecture, FDX-ACB spans 710–803 (PKYPSVTRDI…LEDTYQAVLR (94 aa)).

It belongs to the phenylalanyl-tRNA synthetase beta subunit family. Type 1 subfamily. In terms of assembly, tetramer of two alpha and two beta subunits. Requires Mg(2+) as cofactor.

It localises to the cytoplasm. The enzyme catalyses tRNA(Phe) + L-phenylalanine + ATP = L-phenylalanyl-tRNA(Phe) + AMP + diphosphate + H(+). In Bacillus subtilis (strain 168), this protein is Phenylalanine--tRNA ligase beta subunit (pheT).